The primary structure comprises 410 residues: Transcription factor E2F4 (410 aa).

Positions 1–20 (MAEAGPQAPPPPGTPSRHEK) are disordered. A2 carries the post-translational modification N-acetylalanine. A DNA-binding region spans residues 16–85 (SRHEKSLGLL…KNSIQWKGVG (70 aa)). The leucine-zipper stretch occupies residues 43–65 (LKLAADTLAVRQKRRIYDITNVL). Residues 48–85 (DTLAVRQKRRIYDITNVLEGIGLIEKKSKNSIQWKGVG) carry the DEF box motif. Residues 86 to 181 (PGCNTREIAD…GLNGQKKYQI (96 aa)) are dimerization. Disordered stretches follow at residues 203–258 (PPVA…GSTQ) and 303–341 (SALLDSSSSSSSSSSSSSSSSSGPNPSTSFEPIKADPTG). 2 stretches are compositionally biased toward low complexity: residues 231-252 (PALAQPQESSPPSSPQLTTPTP) and 308-324 (SSSSSSSSSSSSSSSSS). The interval 334–410 (PIKADPTGVL…DLFDVPVLKL (77 aa)) is transactivation. At S381 the chain carries Phosphoserine. The short motif at 386–389 (DHDY) is the HCFC1-binding-motif (HBM) element. Positions 387-404 (HDYIYNLDESEGVCDLFD) are interaction with RBL1 and RBL2.

Belongs to the E2F/DP family. Component of the DRTF1/E2F transcription factor complex. Binds cooperatively with TFDP1/Dp-1 to E2F sites. The E2F4/TFDP1 dimer interacts preferentially with pocket protein RBL1, which inhibits the E2F transactivation domain. Lower affinity interaction has been found with retinoblastoma protein RB1. Interacts with TRRAP, which probably mediates its interaction with histone acetyltransferase complexes, leading to transcription activation. Interacts with HCFC1. Component of the DREAM complex (also named LINC complex) at least composed of E2F4, E2F5, LIN9, LIN37, LIN52, LIN54, MYBL1, MYBL2, RBL1, RBL2, RBBP4, TFDP1 and TFDP2. The complex exists in quiescent cells where it represses cell cycle-dependent genes. It dissociates in S phase when LIN9, LIN37, LIN52 and LIN54 form a subcomplex that binds to MYBL2. Interacts with PML. Interacts with CEBPA (when phosphorylated). Post-translationally, differentially phosphorylated in vivo.

Its subcellular location is the nucleus. In terms of biological role, transcription activator that binds DNA cooperatively with DP proteins through the E2 recognition site, 5'-TTTC[CG]CGC-3' found in the promoter region of a number of genes whose products are involved in cell cycle regulation or in DNA replication. The DRTF1/E2F complex functions in the control of cell-cycle progression from G1 to S phase. E2F4 binds with high affinity to RBL1 and RBL2. In some instances can also bind RB1. Specifically required for multiciliate cell differentiation: together with MCIDAS and E2F5, binds and activate genes required for centriole biogenesis. The protein is Transcription factor E2F4 (E2f4) of Mus musculus (Mouse).